Reading from the N-terminus, the 266-residue chain is MLVFKRGIHVVPKLPNSKALLQNGVPNILSSSGFKTVWFDYQRYLCDKLTLATAGQSLESYYPFHILLKTAGNPLQSNIFNLASSIHNNHLFVENILPSAVEHGTNSNAVVKTEPSRLFLSKIKDSFNGSDWEVVKEEMIYRAENEVLGQGWLFLVENNEKKLFILTSNNNGTPYYFPRNQSFDLNSAISIDEFATLKQMKELIGKSTKLNGKVQDWTMPIICVNLWDHAYLHDYGVGNRSKYVKNVLDNLNWSVVNNRIFSGISK.

This sequence belongs to the mitochondrion-specific ribosomal protein mS42 family. As to quaternary structure, component of the mitochondrial small ribosomal subunit (mt-SSU). Mature yeast 74S mitochondrial ribosomes consist of a small (37S) and a large (54S) subunit. The 37S small subunit contains a 15S ribosomal RNA (15S mt-rRNA) and 34 different proteins. The 54S large subunit contains a 21S rRNA (21S mt-rRNA) and 46 different proteins. mS42 forms a heterodimer with mS43, building a large protuberance adjacent to the mRNA channel exit in the mt-SSU body.

It localises to the mitochondrion. Functionally, component of the mitochondrial ribosome (mitoribosome), a dedicated translation machinery responsible for the synthesis of mitochondrial genome-encoded proteins, including at least some of the essential transmembrane subunits of the mitochondrial respiratory chain. The mitoribosomes are attached to the mitochondrial inner membrane and translation products are cotranslationally integrated into the membrane. This is Small ribosomal subunit protein mS42 (RSM26) from Saccharomyces cerevisiae (strain ATCC 204508 / S288c) (Baker's yeast).